The chain runs to 402 residues: Protein FAM221B (402 aa).

Over residues 1–35 the composition is skewed to basic and acidic residues; the sequence is MEAHEIIEEPHITMDAEKHPPSKDPSAEDLQENHI. 2 disordered regions span residues 1 to 205 and 378 to 402; these read MEAH…TARP and DTQK…HRPL. Composition is skewed to polar residues over residues 77 to 90 and 393 to 402; these read EPSI…TPTY and DTVSNWHRPL.

The protein belongs to the FAM221 family.

The protein is Protein FAM221B (FAM221B) of Homo sapiens (Human).